Reading from the N-terminus, the 376-residue chain is Heme chaperone HemW (376 aa).

Residues Met1–Glu236 enclose the Radical SAM core domain. S-adenosyl-L-methionine is bound at residue Tyr10. Positions 16, 20, and 23 each coordinate [4Fe-4S] cluster. S-adenosyl-L-methionine contacts are provided by residues Gly66, Gly67–Thr68, Glu99, Gln126, Arg138, and Asp162.

Belongs to the anaerobic coproporphyrinogen-III oxidase family. HemW subfamily. It depends on [4Fe-4S] cluster as a cofactor.

The protein resides in the cytoplasm. Its function is as follows. Probably acts as a heme chaperone, transferring heme to an unknown acceptor. Binds one molecule of heme per monomer, possibly covalently. Binds 1 [4Fe-4S] cluster. The cluster is coordinated with 3 cysteines and an exchangeable S-adenosyl-L-methionine. This Buchnera aphidicola subsp. Schizaphis graminum (strain Sg) protein is Heme chaperone HemW.